We begin with the raw amino-acid sequence, 468 residues long: Flavin-containing monooxygenase FMO GS-OX-like 1 (468 aa).

An FAD-binding site is contributed by 16 to 21 (GLGAAG). NADP(+) is bound at residue 211–216 (GSQASG).

Belongs to the FMO family. It depends on FAD as a cofactor.

Its function is as follows. Catalyzes the conversion of methylthioalkyl glucosinolates of any chain length into methylsulfinylalkyl glucosinolates. The sequence is that of Flavin-containing monooxygenase FMO GS-OX-like 1 from Arabidopsis thaliana (Mouse-ear cress).